A 468-amino-acid polypeptide reads, in one-letter code: MITTRFAPSPTGFLHVGGVRTALFSWLYAKNNNGKFILRIEDTDLERSTQEAVDAILDGMSWLGLKNDGEIYYQTKRFDRYKEVIQELIADGKAYYCSCSKERLEELREYQQANNLKTGYDGKCRDANYIPQQGESYVVRFKNPQDGVVSWDDAVKGRISISNHELDDMIIQRADGSPTYNFCVVVDDIDMAITHIIRGDDHVNNTPKQINIYKALNANVPIFAHVPMILGPDGAKLSKRHGAVNVMQYREDGYLPQAILNYLVRLGWSHGDQEIFSIEEMIKAFNLEHINASPSRFDFEKLKWLNKHYIKESKFDDIQTEVEYHFAKTGLDISNGPDLKELVAVMAEKVDTLVELAEKSSYFYSDDISYDENAVKKHIKASTGEIFVKLLENFEALDAQQWQDPDVLHNIVSTTAEQCQVGMGKVGMPLRVAITGSGQSPDIGITLKLLGKNKVVARLTKALEELCK.

Positions 8-18 (PSPTGFLHVGG) match the 'HIGH' region motif. 4 residues coordinate Zn(2+): C97, C99, C124, and D126. The short motif at 236–240 (KLSKR) is the 'KMSKS' region element. Residue K239 participates in ATP binding.

This sequence belongs to the class-I aminoacyl-tRNA synthetase family. Glutamate--tRNA ligase type 1 subfamily. As to quaternary structure, monomer. Zn(2+) serves as cofactor.

The protein resides in the cytoplasm. The enzyme catalyses tRNA(Glu) + L-glutamate + ATP = L-glutamyl-tRNA(Glu) + AMP + diphosphate. Catalyzes the attachment of glutamate to tRNA(Glu) in a two-step reaction: glutamate is first activated by ATP to form Glu-AMP and then transferred to the acceptor end of tRNA(Glu). This Francisella tularensis subsp. tularensis (strain SCHU S4 / Schu 4) protein is Glutamate--tRNA ligase.